Here is a 211-residue protein sequence, read N- to C-terminus: Large ribosomal subunit protein uL3 (211 aa).

Gln-150 is subject to N5-methylglutamine.

It belongs to the universal ribosomal protein uL3 family. Part of the 50S ribosomal subunit. Forms a cluster with proteins L14 and L19. In terms of processing, methylated by PrmB.

One of the primary rRNA binding proteins, it binds directly near the 3'-end of the 23S rRNA, where it nucleates assembly of the 50S subunit. This Pseudomonas fluorescens (strain ATCC BAA-477 / NRRL B-23932 / Pf-5) protein is Large ribosomal subunit protein uL3.